The following is a 971-amino-acid chain: Reversion-inducing cysteine-rich protein with Kazal motifs (971 aa).

The first 22 residues, 1-22 (MATVRASLRGALLLLLAVAGVA), serve as a signal peptide directing secretion. The Knot 1 repeat unit spans residues 37–84 (CCNHSKDNQMCRDVCEQIFSSKSESRLKHLLQRAPDYCPETMVEIWNC). The segment at 37–338 (CCNHSKDNQM…NPVEVSMLTC (302 aa)) is 5 X Knot repeats. 2 N-linked (GlcNAc...) asparagine glycosylation sites follow: asparagine 39 and asparagine 86. 2 Knot repeats span residues 104–141 (CCELAIALECRQACKQASSKNDISKVCRKEYENALFSC) and 151–197 (CCSY…LIHC). Asparagine 200 carries N-linked (GlcNAc...) asparagine glycosylation. 2 Knot repeats span residues 216 to 263 (CCDR…LWQC) and 292 to 338 (CCSK…MLTC). 2 N-linked (GlcNAc...) asparagine glycosylation sites follow: asparagine 297 and asparagine 352. Kazal-like domains are found at residues 627 to 673 (TFTG…SCMS), 698 to 752 (TFDK…PCQP), and 753 to 789 (FCRATEPVCGHNGETYSSVCAAYSDRVAVDYYGDCQA). 6 cysteine pairs are disulfide-bonded: cysteine 633–cysteine 658, cysteine 635–cysteine 654, cysteine 643–cysteine 671, cysteine 716–cysteine 735, cysteine 724–cysteine 750, and cysteine 761–cysteine 787. The GPI-anchor amidated serine moiety is linked to residue serine 942. The propeptide at 943–971 (AGVRARPSCHSLLLPLSLGLALHLLWTYN) is removed in mature form.

Belongs to the RECK family. In terms of assembly, interacts (via knot repeats) with WNT7A (via disordered linker region); the interaction is direct. Interacts (via knot repeats) with WNT7B (via disordered linker region); the interaction is direct. Interacts with ADGRA2; the interaction is direct. Interacts with MMP9. In terms of processing, N-glycosylated. Expressed in various tissues and untransformed cells. It is undetectable in tumor-derived cell lines and oncogenically transformed cells.

It localises to the cell membrane. Functionally, functions together with ADGRA2 to enable brain endothelial cells to selectively respond to Wnt7 signals (WNT7A or WNT7B). Plays a key role in Wnt7-specific responses: required for central nervous system (CNS) angiogenesis and blood-brain barrier regulation. Acts as a Wnt7-specific coactivator of canonical Wnt signaling by decoding Wnt ligands: acts by interacting specifically with the disordered linker region of Wnt7, thereby conferring ligand selectivity for Wnt7. ADGRA2 is then required to deliver RECK-bound Wnt7 to frizzled by assembling a higher-order RECK-ADGRA2-Fzd-LRP5-LRP6 complex. Also acts as a serine protease inhibitor: negatively regulates matrix metalloproteinase-9 (MMP9) by suppressing MMP9 secretion and by direct inhibition of its enzymatic activity. Also inhibits metalloproteinase activity of MMP2 and MMP14 (MT1-MMP). The protein is Reversion-inducing cysteine-rich protein with Kazal motifs of Homo sapiens (Human).